We begin with the raw amino-acid sequence, 298 residues long: ATP phosphoribosyltransferase (298 aa).

This sequence belongs to the ATP phosphoribosyltransferase family. Long subfamily. Mg(2+) serves as cofactor.

The protein resides in the cytoplasm. The catalysed reaction is 1-(5-phospho-beta-D-ribosyl)-ATP + diphosphate = 5-phospho-alpha-D-ribose 1-diphosphate + ATP. It participates in amino-acid biosynthesis; L-histidine biosynthesis; L-histidine from 5-phospho-alpha-D-ribose 1-diphosphate: step 1/9. Its activity is regulated as follows. Feedback inhibited by histidine. Its function is as follows. Catalyzes the condensation of ATP and 5-phosphoribose 1-diphosphate to form N'-(5'-phosphoribosyl)-ATP (PR-ATP). Has a crucial role in the pathway because the rate of histidine biosynthesis seems to be controlled primarily by regulation of HisG enzymatic activity. In Tolumonas auensis (strain DSM 9187 / NBRC 110442 / TA 4), this protein is ATP phosphoribosyltransferase.